The chain runs to 205 residues: Large ribosomal subunit protein uL3 (205 aa).

It belongs to the universal ribosomal protein uL3 family. Part of the 50S ribosomal subunit. Forms a cluster with proteins L14 and L19.

Its function is as follows. One of the primary rRNA binding proteins, it binds directly near the 3'-end of the 23S rRNA, where it nucleates assembly of the 50S subunit. The protein is Large ribosomal subunit protein uL3 of Thermosipho melanesiensis (strain DSM 12029 / CIP 104789 / BI429).